A 154-amino-acid chain; its full sequence is Myoglobin (154 aa).

The 147-residue stretch at 2–148 (GLSDGEWQLV…FRNDMAAKYK (147 aa)) folds into the Globin domain. Ser-4 carries the phosphoserine modification. Residue His-65 participates in nitrite binding. His-65 is a binding site for O2. Residue Thr-68 is modified to Phosphothreonine. His-94 is a heme b binding site.

It belongs to the globin family. In terms of assembly, monomeric.

Its subcellular location is the cytoplasm. The protein resides in the sarcoplasm. The catalysed reaction is Fe(III)-heme b-[protein] + nitric oxide + H2O = Fe(II)-heme b-[protein] + nitrite + 2 H(+). It catalyses the reaction H2O2 + AH2 = A + 2 H2O. Functionally, monomeric heme protein which primary function is to store oxygen and facilitate its diffusion within muscle tissues. Reversibly binds oxygen through a pentacoordinated heme iron and enables its timely and efficient release as needed during periods of heightened demand. Depending on the oxidative conditions of tissues and cells, and in addition to its ability to bind oxygen, it also has a nitrite reductase activity whereby it regulates the production of bioactive nitric oxide. Under stress conditions, like hypoxia and anoxia, it also protects cells against reactive oxygen species thanks to its pseudoperoxidase activity. The sequence is that of Myoglobin (MB) from Erythrocebus patas (Red guenon).